A 176-amino-acid polypeptide reads, in one-letter code: Ribosome maturation factor RimM (176 aa).

Positions 97 to 176 (EDEFYWRDLI…QILVDWDPDF (80 aa)) constitute a PRC barrel domain.

Belongs to the RimM family. In terms of assembly, binds ribosomal protein uS19.

Its subcellular location is the cytoplasm. An accessory protein needed during the final step in the assembly of 30S ribosomal subunit, possibly for assembly of the head region. Essential for efficient processing of 16S rRNA. May be needed both before and after RbfA during the maturation of 16S rRNA. It has affinity for free ribosomal 30S subunits but not for 70S ribosomes. The chain is Ribosome maturation factor RimM from Shewanella sp. (strain ANA-3).